The chain runs to 437 residues: Phosphomethylpyrimidine synthase (437 aa).

Substrate contacts are provided by residues N69, M98, Y127, H163, 185–187, 226–229, and E265; these read SRG and DACR. H269 contributes to the Zn(2+) binding site. Y292 provides a ligand contact to substrate. H333 is a Zn(2+) binding site. C409, C412, and C416 together coordinate [4Fe-4S] cluster.

It belongs to the ThiC family. [4Fe-4S] cluster is required as a cofactor.

The catalysed reaction is 5-amino-1-(5-phospho-beta-D-ribosyl)imidazole + S-adenosyl-L-methionine = 4-amino-2-methyl-5-(phosphooxymethyl)pyrimidine + CO + 5'-deoxyadenosine + formate + L-methionine + 3 H(+). The protein operates within cofactor biosynthesis; thiamine diphosphate biosynthesis. In terms of biological role, catalyzes the synthesis of the hydroxymethylpyrimidine phosphate (HMP-P) moiety of thiamine from aminoimidazole ribotide (AIR) in a radical S-adenosyl-L-methionine (SAM)-dependent reaction. The polypeptide is Phosphomethylpyrimidine synthase (Clostridium botulinum (strain Loch Maree / Type A3)).